Here is a 362-residue protein sequence, read N- to C-terminus: MKSALKTFVPGALALLLLFPVAAQAKEVETKTKLANVVILATGGTIAGAGASAANSATYQAAKVGIEQLIAGVPELSQIANVRGEQVMQIASESINNENLLQLGRRVAELADSKDVDGIVITHGTDTLEETAYFLNLVEKTDKPIIVVGSMRPGTAMSADGMLNLYNAVAVAGSKDARGKGVLVTMNDEIQSGRDVSKMINIKTEAFKSPWGPLGMVVEGKSYWFRLPAKRHTMDSEFDIKTIKSLPDVEIAYGYGNVSDTAVKALAQAGAKAIIHAGTGNGSVSSKVVPALQELRKQGVQIIRSSHVNAGGFVLRNAEQPDDKYDWVVAHDLNPQKARILAMVALTKTQDSKELQRMFWEY.

The N-terminal stretch at 1-25 (MKSALKTFVPGALALLLLFPVAAQA) is a signal peptide. Residues 35–362 (ANVVILATGG…KELQRMFWEY (328 aa)) form the Asparaginase/glutaminase domain. The Acyl-ester intermediate role is filled by threonine 45. Substrate-binding positions include serine 92 and 125–126 (TD).

Belongs to the asparaginase 1 family. In terms of assembly, homotetramer.

The protein resides in the periplasm. The enzyme catalyses L-glutamine + H2O = L-glutamate + NH4(+). It catalyses the reaction L-asparagine + H2O = L-aspartate + NH4(+). The polypeptide is Glutaminase-asparaginase (Pseudomonas fluorescens biotype A).